A 408-amino-acid chain; its full sequence is Dual-specificity RNA methyltransferase RlmN (408 aa).

E122 functions as the Proton acceptor in the catalytic mechanism. A Radical SAM core domain is found at E128–R369. The cysteines at positions 135 and 380 are disulfide-linked. [4Fe-4S] cluster contacts are provided by C142, C146, and C149. S-adenosyl-L-methionine contacts are provided by residues G206–E207, S238, S260–H262, and N337. The S-methylcysteine intermediate role is filled by C380.

It belongs to the radical SAM superfamily. RlmN family. Requires [4Fe-4S] cluster as cofactor.

The protein localises to the cytoplasm. The catalysed reaction is adenosine(2503) in 23S rRNA + 2 reduced [2Fe-2S]-[ferredoxin] + 2 S-adenosyl-L-methionine = 2-methyladenosine(2503) in 23S rRNA + 5'-deoxyadenosine + L-methionine + 2 oxidized [2Fe-2S]-[ferredoxin] + S-adenosyl-L-homocysteine. The enzyme catalyses adenosine(37) in tRNA + 2 reduced [2Fe-2S]-[ferredoxin] + 2 S-adenosyl-L-methionine = 2-methyladenosine(37) in tRNA + 5'-deoxyadenosine + L-methionine + 2 oxidized [2Fe-2S]-[ferredoxin] + S-adenosyl-L-homocysteine. In terms of biological role, specifically methylates position 2 of adenine 2503 in 23S rRNA and position 2 of adenine 37 in tRNAs. m2A2503 modification seems to play a crucial role in the proofreading step occurring at the peptidyl transferase center and thus would serve to optimize ribosomal fidelity. The chain is Dual-specificity RNA methyltransferase RlmN from Chelativorans sp. (strain BNC1).